We begin with the raw amino-acid sequence, 216 residues long: Ephrin-A1 (216 aa).

An N-terminal signal peptide occupies residues 1–28 (MMELYRAAVQLIVGVGLGVGLWLREAQG). The 133-residue stretch at 29-161 (ERHIVFWNSS…RLRVHVSGRT (133 aa)) folds into the Ephrin RBD domain. The N-linked (GlcNAc...) asparagine glycan is linked to N36. Cysteines 61 and 102 form a disulfide. Residues 162–181 (TPPPVNVHTPRSHIQSDEPE) are disordered. S195 carries GPI-anchor amidated serine lipidation. Positions 196 to 216 (AAPGTPCTLYGLLLAALLLRL) are cleaved as a propeptide — removed in mature form.

The protein belongs to the ephrin family. In terms of assembly, binds to the receptor tyrosine kinases EPHA2, EPHA4, EPHA5, EPHA6 and EPHA7. Also binds with low affinity to EPHA1.

The protein resides in the membrane. Functionally, cell surface GPI-bound ligand for Eph receptors, a family of receptor tyrosine kinases which are crucial for migration, repulsion and adhesion during neuronal, vascular and epithelial development. Binds promiscuously Eph receptors residing on adjacent cells, leading to contact-dependent bidirectional signaling into neighboring cells. The chain is Ephrin-A1 (efna1) from Xenopus laevis (African clawed frog).